A 326-amino-acid chain; its full sequence is Beta-ketoacyl-[acyl-carrier-protein] synthase III (326 aa).

Residues Cys-116 and His-253 contribute to the active site. Positions 254–258 (QANIR) are ACP-binding. Asn-283 is a catalytic residue.

This sequence belongs to the thiolase-like superfamily. FabH family. As to quaternary structure, homodimer.

Its subcellular location is the cytoplasm. It carries out the reaction malonyl-[ACP] + acetyl-CoA + H(+) = 3-oxobutanoyl-[ACP] + CO2 + CoA. Its pathway is lipid metabolism; fatty acid biosynthesis. In terms of biological role, catalyzes the condensation reaction of fatty acid synthesis by the addition to an acyl acceptor of two carbons from malonyl-ACP. Catalyzes the first condensation reaction which initiates fatty acid synthesis and may therefore play a role in governing the total rate of fatty acid production. Possesses both acetoacetyl-ACP synthase and acetyl transacylase activities. Its substrate specificity determines the biosynthesis of branched-chain and/or straight-chain of fatty acids. This is Beta-ketoacyl-[acyl-carrier-protein] synthase III from Jannaschia sp. (strain CCS1).